A 467-amino-acid polypeptide reads, in one-letter code: UDP-N-acetylmuramoylalanine--D-glutamate ligase (467 aa).

121-127 (GTNGKST) provides a ligand contact to ATP.

It belongs to the MurCDEF family.

The protein resides in the cytoplasm. The enzyme catalyses UDP-N-acetyl-alpha-D-muramoyl-L-alanine + D-glutamate + ATP = UDP-N-acetyl-alpha-D-muramoyl-L-alanyl-D-glutamate + ADP + phosphate + H(+). Its pathway is cell wall biogenesis; peptidoglycan biosynthesis. In terms of biological role, cell wall formation. Catalyzes the addition of glutamate to the nucleotide precursor UDP-N-acetylmuramoyl-L-alanine (UMA). In Brucella suis biovar 1 (strain 1330), this protein is UDP-N-acetylmuramoylalanine--D-glutamate ligase.